The chain runs to 1164 residues: Nuclear exosome regulator NRDE2 (1164 aa).

2 disordered regions span residues 1–25 (MALFPAFAGLSEAPDGGSSRKELDW) and 39–149 (LSQQ…GHRF). Residue alanine 2 is modified to N-acetylalanine. Residues 61 to 73 (LKSESSDESDTNK) show a composition bias toward basic and acidic residues. Positions 61–383 (LKSESSDESD…IESNQSSVDL (323 aa)) form a coiled coil. Basic residues predominate over residues 74-103 (KLKQTSRKKKKEKKKKRKHQHHKKTKRKHG). Residues 110–133 (SETDTDSEKDKPSRGVGGSKKESE) show a composition bias toward basic and acidic residues. The interval 163 to 266 (FRTDKKPDPA…KDLEDAAPVT (104 aa)) is MID/MTR4-interacting domain. The tract at residues 279-305 (TTHWLQGQGPPEQESKQPDAQPDSESA) is disordered. HAT repeat units lie at residues 305–337 (AALKAKVEEFNRRVRENPRDTQLWMAFVAFQDE), 395–427 (WEPSTLVKEWQKLIFLHPNNTALWQKYLLFCQS), 758–792 (SQGKNCKKLAKNLLKEPENCNNFCLWKQYAHLEWL), 978–1010 (YPLAPLREALSQALKLYPGNQVLWRSYVQIQNK), and 1067–1101 (GLMHRIQALFENAMRSDSGSQCPLLWRMYLNFLVS).

The protein belongs to the NRDE2 family. As to quaternary structure, interacts with MTREX; the interaction is direct and stabilizes NRDE2. Interacts with EXOSC10, EFTUD2 and EIF4A3.

It is found in the nucleus speckle. The protein localises to the nucleus. Its subcellular location is the nucleolus. The protein resides in the nucleoplasm. Protein of the nuclear speckles that regulates RNA degradation and export from the nucleus through its interaction with MTREX an essential factor directing various RNAs to exosomal degradation. Changes the conformation of MTREX, precluding its association with the nuclear exosome and interaction with proteins required for its function in RNA exosomal degradation. Negatively regulates, for instance, the degradation of mRNAs and lncRNAs by inhibiting their MTREX-mediated recruitment to nuclear exosome. By preventing the degradation of RNAs in the nucleus, it promotes their export to the cytoplasm. U5 snRNP-associated RNA splicing factor which is required for efficient splicing of CEP131 pre-mRNA and plays an important role in centrosome maturation, integrity and function during mitosis. Suppresses intron retention in a subset of pre-mRNAs containing short, GC-rich introns with relatively weak 5' and 3' splice sites. Plays a role in DNA damage response. The sequence is that of Nuclear exosome regulator NRDE2 from Homo sapiens (Human).